A 355-amino-acid polypeptide reads, in one-letter code: Protein RecA (355 aa).

ATP is bound at residue 74–81 (GPESSGKT).

This sequence belongs to the RecA family.

It is found in the cytoplasm. Its function is as follows. Can catalyze the hydrolysis of ATP in the presence of single-stranded DNA, the ATP-dependent uptake of single-stranded DNA by duplex DNA, and the ATP-dependent hybridization of homologous single-stranded DNAs. It interacts with LexA causing its activation and leading to its autocatalytic cleavage. This is Protein RecA from Cytophaga hutchinsonii (strain ATCC 33406 / DSM 1761 / CIP 103989 / NBRC 15051 / NCIMB 9469 / D465).